Reading from the N-terminus, the 403-residue chain is MHAWPAPKIPSLPGRNRLPSLFDTASRRLVTVGSQQGASMYVCGITPYDATHLGHAATYVAFDLLVRTWHDAGVTVRYAQNVTDVDDPLLERARQVDQPWEAIAARETAKFRADMAALRVVPPDRYVGVVESLPQIIGLIEVLRSRGLTYELDGDQYFATHAIPDFGAVSHLGRDDMIALFAARGGDPDRAGKKDPLDALLWRGKRPEEPSWPAPFGRGRPGWHVECAAIALTHLPLPLDVQGGGADLVFPHHDMTAAQAEAATGRRFARAYVHTGLVAYQGEKMSKSLGNLVFVSDLCAAGADPMAVRLALLDHHYRTEWEWTPRLLDEATDRLAEWRAAVRRPRGAPGDGLLAAVRDRLADDLDAPGAIALIDEWTTQDGDDPDAPTLVAAMADALLGVHL.

Cysteine 43 contributes to the Zn(2+) binding site. L-cysteinyl-5'-AMP contacts are provided by residues 43 to 46 (CGIT), threonine 58, 81 to 83 (NVT), and tryptophan 223. The 'HIGH' region signature appears at 45-55 (ITPYDATHLGH). Residue cysteine 227 participates in Zn(2+) binding. Residue 245-247 (GAD) coordinates L-cysteinyl-5'-AMP. Histidine 252 is a binding site for Zn(2+). Valine 278 is a binding site for L-cysteinyl-5'-AMP. The 'KMSKS' region motif lies at 284-288 (KMSKS).

The protein belongs to the class-I aminoacyl-tRNA synthetase family. MshC subfamily. Monomer. Requires Zn(2+) as cofactor.

The catalysed reaction is 1D-myo-inositol 2-amino-2-deoxy-alpha-D-glucopyranoside + L-cysteine + ATP = 1D-myo-inositol 2-(L-cysteinylamino)-2-deoxy-alpha-D-glucopyranoside + AMP + diphosphate + H(+). Functionally, catalyzes the ATP-dependent condensation of GlcN-Ins and L-cysteine to form L-Cys-GlcN-Ins. This Acidothermus cellulolyticus (strain ATCC 43068 / DSM 8971 / 11B) protein is L-cysteine:1D-myo-inositol 2-amino-2-deoxy-alpha-D-glucopyranoside ligase.